The sequence spans 155 residues: Ribosomal RNA large subunit methyltransferase H (155 aa).

S-adenosyl-L-methionine contacts are provided by residues L72, G103, and 122–127 (LSALTL).

The protein belongs to the RNA methyltransferase RlmH family. In terms of assembly, homodimer.

The protein resides in the cytoplasm. It carries out the reaction pseudouridine(1915) in 23S rRNA + S-adenosyl-L-methionine = N(3)-methylpseudouridine(1915) in 23S rRNA + S-adenosyl-L-homocysteine + H(+). Functionally, specifically methylates the pseudouridine at position 1915 (m3Psi1915) in 23S rRNA. The chain is Ribosomal RNA large subunit methyltransferase H from Salmonella choleraesuis (strain SC-B67).